The primary structure comprises 103 residues: Large ribosomal subunit protein bL21 (103 aa).

The protein belongs to the bacterial ribosomal protein bL21 family. In terms of assembly, part of the 50S ribosomal subunit. Contacts protein L20.

In terms of biological role, this protein binds to 23S rRNA in the presence of protein L20. The sequence is that of Large ribosomal subunit protein bL21 from Legionella pneumophila (strain Lens).